The primary structure comprises 257 residues: Global transcriptional regulator CodY (257 aa).

The tract at residues 1–155 (MSLLSKTREL…AATVLGMEIL (155 aa)) is GAF domain. Positions 203–222 (ASKVADRVGITRSVIVNALR) form a DNA-binding region, H-T-H motif.

Belongs to the CodY family.

The protein resides in the cytoplasm. Functionally, DNA-binding global transcriptional regulator which is involved in the adaptive response to starvation and acts by directly or indirectly controlling the expression of numerous genes in response to nutrient availability. During rapid exponential growth, CodY is highly active and represses genes whose products allow adaptation to nutrient depletion. This is Global transcriptional regulator CodY from Staphylococcus carnosus (strain TM300).